The following is a 313-amino-acid chain: Olfactory receptor 4M2 (313 aa).

The Cytoplasmic portion of the chain corresponds to M1–L25. The helical transmembrane segment at V26–I46 threads the bilayer. Over C47 to S57 the chain is Extracellular. The chain crosses the membrane as a helical span at residues P58–A78. Residues P79–C97 are Cytoplasmic-facing. The cysteines at positions 97 and 179 are disulfide-linked. A helical membrane pass occupies residues I98–M118. Topologically, residues A119–C142 are extracellular. Residues I143–I163 traverse the membrane as a helical segment. Residues V164 to G204 lie on the Cytoplasmic side of the membrane. A helical membrane pass occupies residues L205 to L225. The Extracellular portion of the chain corresponds to K226–A238. The helical transmembrane segment at V239–I259 threads the bilayer. Topologically, residues Y260–D270 are cytoplasmic. The chain crosses the membrane as a helical span at residues K271 to L291. Residues R292–K313 lie on the Extracellular side of the membrane.

It belongs to the G-protein coupled receptor 1 family.

It is found in the membrane. In terms of biological role, odorant receptor. The chain is Olfactory receptor 4M2 from Homo sapiens (Human).